A 368-amino-acid chain; its full sequence is RNA polymerase sigma factor SigA (368 aa).

Over residues 71-83 the composition is skewed to basic and acidic residues; that stretch reads NEKDSSDTDDKIN. The segment at 71 to 90 is disordered; that stretch reads NEKDSSDTDDKINPNDLSAP. A sigma-70 factor domain-2 region spans residues 135–205; the sequence is LAEANLRLVV…TRAIADQART (71 aa). The Interaction with polymerase core subunit RpoC motif lies at 159–162; it reads DLIQ. The interval 214–290 is sigma-70 factor domain-3; that stretch reads ETINKLIRVQ…DQEAQSPSDH (77 aa). The sigma-70 factor domain-4 stretch occupies residues 303-356; that stretch reads VLDTLTDREENVLRLRFGLDDGRTRTLEEVGKVFGVTRERIRQIEAKALRKLRH. Positions 329–348 form a DNA-binding region, H-T-H motif; sequence LEEVGKVFGVTRERIRQIEA.

It belongs to the sigma-70 factor family. RpoD/SigA subfamily. As to quaternary structure, interacts transiently with the RNA polymerase catalytic core.

The protein localises to the cytoplasm. In terms of biological role, sigma factors are initiation factors that promote the attachment of RNA polymerase to specific initiation sites and are then released. This sigma factor is the primary sigma factor during exponential growth. The chain is RNA polymerase sigma factor SigA from Staphylococcus epidermidis (strain ATCC 35984 / DSM 28319 / BCRC 17069 / CCUG 31568 / BM 3577 / RP62A).